The chain runs to 171 residues: Putative adenylate kinase (171 aa).

Positions 9, 11, 12, 13, and 14 each coordinate ATP. The NMP stretch occupies residues 28 to 51; sequence SLGELIRQKGFVLGRDPIRGYLEA. The interval 99–109 is LID; that stretch reads GRGYPEGKVLE. An ATP-binding site is contributed by Arg-100.

This sequence belongs to the adenylate kinase family. AK6 subfamily. Interacts with uS11. Not a structural component of 40S pre-ribosomes, but transiently interacts with them by binding to uS11.

The enzyme catalyses AMP + ATP = 2 ADP. The catalysed reaction is ATP + H2O = ADP + phosphate + H(+). Broad-specificity nucleoside monophosphate (NMP) kinase that catalyzes the reversible transfer of the terminal phosphate group between nucleoside triphosphates and monophosphates. Also has ATPase activity. Involved in the late maturation steps of the 30S ribosomal particles, specifically 16S rRNA maturation. While NMP activity is not required for ribosome maturation, ATPase activity is. Associates transiently with small ribosomal subunit protein uS11. ATP hydrolysis breaks the interaction with uS11. May temporarily remove uS11 from the ribosome to enable a conformational change of the ribosomal RNA that is needed for the final maturation step of the small ribosomal subunit. This Methanothermobacter thermautotrophicus (strain ATCC 29096 / DSM 1053 / JCM 10044 / NBRC 100330 / Delta H) (Methanobacterium thermoautotrophicum) protein is Putative adenylate kinase.